Reading from the N-terminus, the 2169-residue chain is Voltage-dependent L-type calcium channel subunit alpha-1C (2169 aa).

Topologically, residues 1–153 are cytoplasmic; that stretch reads MVPLVQPTTP…RACISIVEWK (153 aa). The tract at residues 76-97 is calmodulin-binding; sequence GAALSWQAAIDAGRQAKLMGSA. Positions 98 to 108 are enriched in polar residues; the sequence is GNTTISTVSST. The tract at residues 98–127 is disordered; sequence GNTTISTVSSTQRKRQQYGKPKKQSGTTAT. A compositionally biased stretch (basic residues) spans 109–120; the sequence is QRKRQQYGKPKK. Residues 140-437 form an I repeat; that stretch reads NPIRRACISI…LVLGVLSGEF (298 aa). A helical transmembrane segment spans residues 154-172; it reads PFEIIILLTIFANCVALAI. Over 173–187 the chain is Extracellular; sequence YIPFPEDDSNATNSN. Residue Asn-182 is glycosylated (N-linked (GlcNAc...) asparagine). The helical transmembrane segment at 188–208 threads the bilayer; the sequence is LERVEYLFLIIFTVEAFLKVI. The Cytoplasmic segment spans residues 209 to 217; the sequence is AYGLLFHPN. The helical transmembrane segment at 218–238 threads the bilayer; sequence AYLRNGWNLLDFIIVVVGLFS. Residues 239 to 261 are Extracellular-facing; it reads AILEQATKADGANALGGKGAGFD. The helical transmembrane segment at 262-280 threads the bilayer; the sequence is VKALRAFRVLRPLRLVSGV. The Cytoplasmic portion of the chain corresponds to 281–297; it reads PSLQVVLNSIIKAMVPL. Residues 298-319 traverse the membrane as a helical segment; sequence LHTALLVLFVIIIYAIIGLELF. Over 320-379 the chain is Extracellular; the sequence is MGKMHKTCYNQEGITDVPAEEDPSPCALESGHGRQCQNGTVCKPGWDGPKHGITNFDNFA. A disulfide bridge connects residues Cys-345 and Cys-361. N-linked (GlcNAc...) asparagine glycosylation occurs at Asn-357. Residues 380-401 constitute an intramembrane region (pore-forming); that stretch reads FAMLTVFQCITMEGWTDVLYWM. A Selectivity filter of repeat I motif is present at residues 390 to 393; sequence TMEG. Residue Glu-392 coordinates Ca(2+). At 402–409 the chain is on the extracellular side; sequence QDAMGYEL. Residues 410 to 430 form a helical membrane-spanning segment; sequence PWVYFVSLVIFGSFFVLNLVL. Over 431–553 the chain is Cytoplasmic; it reads GVLSGEFSKE…RKCRAAVKSN (123 aa). The interval 457–474 is AID/alpha-interaction domain; mediates interaction with the beta subunit; it reads QQLEEDLKGYLDWITQAE. Residues 478-510 form a disordered region; it reads PENEDEGVDEEKPRNMSMPTSETESVNTENVAG. A compositionally biased stretch (polar residues) spans 494-507; it reads SMPTSETESVNTEN. Ser-498 bears the Phosphoserine mark. The residue at position 505 (Thr-505) is a Phosphothreonine. Residues 539 to 785 form an II repeat; it reads NRFCRRKCRA…VFLAIAVDNL (247 aa). Residues 554-572 form a helical membrane-spanning segment; it reads VFYWLVIFLVFLNTLTIAS. Over 573–583 the chain is Extracellular; that stretch reads EHYNQPHWLTE. The chain crosses the membrane as a helical span at residues 584-604; the sequence is VQDTANKALLALFTAEMLLKM. Residues 605-615 are Cytoplasmic-facing; the sequence is YSLGLQAYFVS. The chain crosses the membrane as a helical span at residues 616 to 635; sequence LFNRLDCFIVCGGILETILV. The Extracellular portion of the chain corresponds to 636 to 644; sequence ETKIMSPLG. The chain crosses the membrane as a helical span at residues 645-663; that stretch reads ISVLRCVRLLRIFKITRYW. Residues 664 to 682 lie on the Cytoplasmic side of the membrane; the sequence is NSLSNLVASLLNSVRSIAS. Residues 683–702 form a helical membrane-spanning segment; sequence LLLLLFLFIIIFSLLGMQLF. At 703–722 the chain is on the extracellular side; it reads GGKFNFDEMRTRRSTFDNFP. Positions 723–744 form an intramembrane region, pore-forming; that stretch reads QSLLTVFQILTGEDWNSVMYDG. The short motif at 733–736 is the Selectivity filter of repeat II element; it reads TGED. Glu-735 is a binding site for Ca(2+). Over 745–754 the chain is Extracellular; it reads IMAYGGPSFP. The chain crosses the membrane as a helical span at residues 755–774; sequence GMLVCIYFIILFICGNYILL. The Cytoplasmic portion of the chain corresponds to 775–929; sequence NVFLAIAVDN…LQCHRIVNDT (155 aa). A disordered region spans residues 793 to 890; the sequence is SAQKEEEEEK…EMPVGPRPRP (98 aa). Positions 812-835 are enriched in basic and acidic residues; that stretch reads SPEKKQEVVEKPAVEETKEEKIEL. 2 positions are modified to phosphoserine: Ser-837 and Ser-844. The segment at 858–905 is interaction with STAC2; that stretch reads NENEDKSPYPNPDAAGEEDEEEPEMPVGPRPRPLSELHLKEKAVPMPE. Residues 872–881 show a composition bias toward acidic residues; sequence AGEEDEEEPE. Residues 916–1198 form an III repeat; the sequence is NRFRLQCHRI…IFVGFVIVTF (283 aa). A helical transmembrane segment spans residues 930–948; the sequence is IFTNLILFFILLSSISLAA. Residues 949 to 960 are Extracellular-facing; sequence EDPVQHTSFRNH. The chain crosses the membrane as a helical span at residues 961–980; sequence ILFYFDIVFTTIFTIEIALK. Topologically, residues 981-996 are cytoplasmic; sequence MTAYGAFLHKGSFCRN. Residues 997–1015 form a helical membrane-spanning segment; sequence YFNILDLLVVSVSLISFGI. At 1016 to 1022 the chain is on the extracellular side; that stretch reads QSSAINV. Residues 1023–1041 form a helical membrane-spanning segment; the sequence is VKILRVLRVLRPLRAINRA. At 1042-1060 the chain is on the cytoplasmic side; the sequence is KGLKHVVQCVFVAIRTIGN. A helical membrane pass occupies residues 1061–1080; sequence IVIVTTLLQFMFACIGVQLF. At 1081-1130 the chain is on the extracellular side; that stretch reads KGKLYTCSDSSKQTEAECKGNYITYKDGEVDQPIIQPRSWENSKFDFDNV. Cysteines 1087 and 1098 form a disulfide. Residues 1118–1207 are dihydropyridine binding; sequence RSWENSKFDF…FQEQGEQEYK (90 aa). An intramembrane region (pore-forming) is located at residues 1131–1151; that stretch reads LAAMMALFTVSTFEGWPELLY. A Selectivity filter of repeat III motif is present at residues 1142–1145; it reads TFEG. Glu-1144 is a binding site for Ca(2+). At 1152 to 1168 the chain is on the extracellular side; that stretch reads RSIDSHTEDKGPIYNYR. A helical transmembrane segment spans residues 1169-1190; it reads VEISIFFIIYIIIIAFFMMNIF. Over 1191–1248 the chain is Cytoplasmic; that stretch reads VGFVIVTFQEQGEQEYKNCELDKNQRQCVEYALKARPLRRYIPKNQHQYKVWYVVNST. One copy of the IV repeat lies at 1235 to 1508; the sequence is NQHQYKVWYV…LFVAVVMDNF (274 aa). The helical transmembrane segment at 1249–1270 threads the bilayer; it reads YFEYLMFVLILLNTICLAMQHY. At 1271–1278 the chain is on the extracellular side; sequence GQSCLFKI. Residues 1279–1300 form a helical membrane-spanning segment; that stretch reads AMNILNMLFTGLFTVEMILKLI. The Cytoplasmic portion of the chain corresponds to 1301–1310; that stretch reads AFKPKHYFCD. Residues 1311–1330 form a helical membrane-spanning segment; it reads AWNTFDALIVVGSIVDIAIT. The Extracellular segment spans residues 1331–1353; that stretch reads EVNPAEHTQCSPSMNAEENSRIS. A helical membrane pass occupies residues 1354–1372; that stretch reads ITFFRLFRVMRLVKLLSRG. Residues 1373 to 1390 are Cytoplasmic-facing; that stretch reads EGIRTLLWTFIKSFQALP. Residues 1391-1411 traverse the membrane as a helical segment; the sequence is YVALLIVMLFFIYAVIGMQVF. The Extracellular portion of the chain corresponds to 1412–1433; it reads GKIALNDTTEINRNNNFQTFPQ. Asn-1417 carries N-linked (GlcNAc...) asparagine glycosylation. The segment at residues 1434–1452 is an intramembrane region (pore-forming); that stretch reads AVLLLFRCATGEAWQDIML. Residues 1443-1446 carry the Selectivity filter of repeat IV motif; it reads TGEA. At 1453–1480 the chain is on the extracellular side; sequence ACMPGKKCAPESDPSNSTEGETPCGSSF. Residues 1459–1527 are dihydropyridine binding; that stretch reads KCAPESDPSN…LGPHHLDEFK (69 aa). Cys-1460 and Cys-1476 form a disulfide bridge. An N-linked (GlcNAc...) asparagine glycan is attached at Asn-1468. Residues 1473-1515 are phenylalkylamine binding; it reads ETPCGSSFAVFYFISFYMLCAFLIINLFVAVVMDNFDYLTRDW. Residues 1481 to 1505 form a helical membrane-spanning segment; that stretch reads AVFYFISFYMLCAFLIINLFVAVVM. Topologically, residues 1506–2169 are cytoplasmic; sequence DNFDYLTRDW…ADSRVHVRSL (664 aa). Positions 1640 to 1667 are important for interaction with STAC1, STAC2 and STAC3; it reads DEVTVGKFYATFLIQEYFRKFKKRKEQG. Residues 1646–1666 are calmodulin-binding IQ region; it reads KFYATFLIQEYFRKFKKRKEQ. The segment at 1680 to 1699 is important for localization in at the junctional membrane; sequence LQAGLRTLHDIGPEIRRAIS. Ser-1699 and Ser-1720 each carry phosphoserine. 2 disordered regions span residues 1761 to 1793 and 1894 to 1920; these read KAGN…TGSN and ENRQ…LRSA. Positions 1780 to 1792 are enriched in polar residues; sequence STFTPSSYSSTGS. The segment covering 1894-1910 has biased composition (basic and acidic residues); that stretch reads ENRQLTPPEEDKGDTRP. Ser-1927 bears the Phosphoserine mark.

It belongs to the calcium channel alpha-1 subunit (TC 1.A.1.11) family. CACNA1C subfamily. As to quaternary structure, component of a calcium channel complex consisting of a pore-forming alpha subunit (CACNA1C) and ancillary beta, gamma and delta subunits. The channel complex contains alpha, beta, gamma and delta subunits in a 1:1:1:1 ratio, i.e. it contains only one of each type of subunit. CACNA1C channel activity is modulated by ancillary subunits, such as CACNB1, CACNB2, CACNB3, CACNA2D1 and CACNA2D4. Interacts with CACNB1. Interacts with CACNB2. Identified in a complex with CACNA2D4 and CACNB3. Interacts with CACNB3. Interacts with CACNA2D1. Interacts with CACNA2D4. Interacts with the gamma subunits CACNG4, CACNG6, CACNG7 and CACNG8. Interacts with CALM1. Interacts (via the N-terminus and the C-terminal C and IQ motifs) with CABP1; this inhibits Ca(2+)-dependent channel inactivation. The binding via the C motif is calcium independent whereas the binding via IQ requires the presence of calcium and is mutually exclusive with calmodulin binding. The binding to the cytoplasmic N-terminal domain is calcium independent but is essential for the channel modulation. Interacts (via C-terminal CDB motif) with CABP5; in a calcium-dependent manner. Interacts with CIB1; the interaction increases upon cardiomyocytes hypertrophy. Interacts with STAC2 and STAC3; this inhibits channel inactivation. Post-translationally, phosphorylation by PKA at Ser-1927 activates the channel. Elevated levels of blood glucose lead to increased phosphorylation by PKA. As to expression, expressed in heart. Expressed in uterus.

It localises to the cell membrane. The protein localises to the sarcolemma. It is found in the perikaryon. Its subcellular location is the postsynaptic density membrane. The protein resides in the cell projection. It localises to the dendrite. The protein localises to the T-tubule. The catalysed reaction is Ca(2+)(in) = Ca(2+)(out). Its activity is regulated as follows. Inhibited by dihydropyridines (DHP), such as isradipine. Inhibited by nifedipine. Channel activity is regulated by Ca(2+) and calmodulin. Binding of STAC1, STAC2 or STAC3 to a region that overlaps with the calmodulin binding site inhibits channel inactivation by Ca(2+) and calmodulin. Binding of calmodulin or CABP1 at the same regulatory sites results in opposite effects on the channel function. Shear stress and pressure increases calcium channel activity. Pore-forming, alpha-1C subunit of the voltage-gated calcium channel that gives rise to L-type calcium currents. Mediates influx of calcium ions into the cytoplasm, and thereby triggers calcium release from the sarcoplasm. Plays an important role in excitation-contraction coupling in the heart. Required for normal heart development and normal regulation of heart rhythm. Required for normal contraction of smooth muscle cells in blood vessels and in the intestine. Essential for normal blood pressure regulation via its role in the contraction of arterial smooth muscle cells. Long-lasting (L-type) calcium channels belong to the 'high-voltage activated' (HVA) group. In Cavia porcellus (Guinea pig), this protein is Voltage-dependent L-type calcium channel subunit alpha-1C (CACNA1C).